Consider the following 134-residue polypeptide: Profilin-3 (134 aa).

The cysteines at positions 13 and 118 are disulfide-linked. The Involved in PIP2 interaction motif lies at 84 to 100 (AVIRGKKGSGGITIKKT). Thr-114 carries the phosphothreonine modification.

It belongs to the profilin family. As to quaternary structure, occurs in many kinds of cells as a complex with monomeric actin in a 1:1 ratio. In terms of processing, phosphorylated by MAP kinases.

It localises to the cytoplasm. The protein localises to the cytoskeleton. Functionally, binds to actin and affects the structure of the cytoskeleton. At high concentrations, profilin prevents the polymerization of actin, whereas it enhances it at low concentrations. The protein is Profilin-3 of Olea europaea (Common olive).